Consider the following 314-residue polypeptide: Ribosomal RNA small subunit methyltransferase H (314 aa).

Residues 31–33 (GGY), Asp-49, Phe-76, Asp-118, and Gln-125 each bind S-adenosyl-L-methionine.

This sequence belongs to the methyltransferase superfamily. RsmH family.

The protein localises to the cytoplasm. It carries out the reaction cytidine(1402) in 16S rRNA + S-adenosyl-L-methionine = N(4)-methylcytidine(1402) in 16S rRNA + S-adenosyl-L-homocysteine + H(+). Its function is as follows. Specifically methylates the N4 position of cytidine in position 1402 (C1402) of 16S rRNA. This chain is Ribosomal RNA small subunit methyltransferase H, found in Wolbachia pipientis wMel.